Here is a 177-residue protein sequence, read N- to C-terminus: Large ribosomal subunit protein uL6 (177 aa).

Belongs to the universal ribosomal protein uL6 family. As to quaternary structure, part of the 50S ribosomal subunit.

This protein binds to the 23S rRNA, and is important in its secondary structure. It is located near the subunit interface in the base of the L7/L12 stalk, and near the tRNA binding site of the peptidyltransferase center. This Rhizobium rhizogenes (strain K84 / ATCC BAA-868) (Agrobacterium radiobacter) protein is Large ribosomal subunit protein uL6.